Reading from the N-terminus, the 230-residue chain is MGKECRDIVELKEKLGIYVDDKLLLQAVTHTSYAHEQKDVVDHNERLEFLGDAVLELAISETLYKKYPELPEGELTKLRAELVCELSLVKIAEKLDLGKYLRLGKGEDSTGGRDRRSTLADTVEALIGAVYLQTNYDQTKQLILDLFKDQLSHIDNQRIGDYKTMIQELVQDRYGDPPKYQIVKESGPDHDKSFVAEVQINNEVVGRGSGKSKKEAEQNAAHFAFQKLSK.

One can recognise an RNase III domain in the interval 8–135 (IVELKEKLGI…LIGAVYLQTN (128 aa)). Glu-48 is a binding site for Mg(2+). The active site involves Asp-52. Asp-121 and Glu-124 together coordinate Mg(2+). Glu-124 is an active-site residue. A DRBM domain is found at 161–230 (DYKTMIQELV…AHFAFQKLSK (70 aa)).

The protein belongs to the ribonuclease III family. In terms of assembly, homodimer. Mg(2+) serves as cofactor.

It localises to the cytoplasm. It carries out the reaction Endonucleolytic cleavage to 5'-phosphomonoester.. Its function is as follows. Digests double-stranded RNA. Involved in the processing of primary rRNA transcript to yield the immediate precursors to the large and small rRNAs (23S and 16S). Processes some mRNAs, and tRNAs when they are encoded in the rRNA operon. Processes pre-crRNA and tracrRNA of type II CRISPR loci if present in the organism. The protein is Ribonuclease 3 of Natranaerobius thermophilus (strain ATCC BAA-1301 / DSM 18059 / JW/NM-WN-LF).